A 163-amino-acid polypeptide reads, in one-letter code: Putative 4-hydroxy-4-methyl-2-oxoglutarate aldolase (163 aa).

Substrate contacts are provided by residues 76-79 (GDMI) and R98. D99 lines the a divalent metal cation pocket.

This sequence belongs to the class II aldolase/RraA-like family. Homotrimer. The cofactor is a divalent metal cation.

The catalysed reaction is 4-hydroxy-4-methyl-2-oxoglutarate = 2 pyruvate. It catalyses the reaction oxaloacetate + H(+) = pyruvate + CO2. Functionally, catalyzes the aldol cleavage of 4-hydroxy-4-methyl-2-oxoglutarate (HMG) into 2 molecules of pyruvate. Also contains a secondary oxaloacetate (OAA) decarboxylase activity due to the common pyruvate enolate transition state formed following C-C bond cleavage in the retro-aldol and decarboxylation reactions. This chain is Putative 4-hydroxy-4-methyl-2-oxoglutarate aldolase, found in Pseudomonas fluorescens (strain SBW25).